Consider the following 472-residue polypeptide: WASH complex subunit 1 (472 aa).

The interval 1-51 (MPQNRSVESQAYSLPLILPDLRREEAIHQITDTLQHLQTVSNDIFSRILQR) is required for WASH complex assembly. Disordered stretches follow at residues 294-411 (DRQD…GGDL) and 429-472 (KVPA…DWES). A compositionally biased stretch (pro residues) spans 301–334 (LPPPPPPPPPPPPPPPPEPSALSPPAPPPPPLSI). A VCA region spans residues 352 to 472 (QGAPKEVVNP…GDGDEDDWES (121 aa)). The 23-residue stretch at 364-386 (GRASLLESIRQAGGIGKANLRNV) folds into the WH2 domain. Positions 385-400 (NVKEKKLEKKKMKEQE) are enriched in basic and acidic residues.

The protein belongs to the WASH1 family. As to quaternary structure, component of the WASH complex.

Its subcellular location is the early endosome membrane. The protein localises to the recycling endosome membrane. Acts as a nucleation-promoting factor at the surface of endosomes, where it recruits and activates the Arp2/3 complex to induce actin polymerization, playing a key role in the fission of tubules that serve as transport intermediates during endosome sorting. This is WASH complex subunit 1 from Xenopus laevis (African clawed frog).